Reading from the N-terminus, the 513-residue chain is ATP synthase subunit alpha (513 aa).

169–176 contacts ATP; the sequence is GDRQTGKT.

It belongs to the ATPase alpha/beta chains family. As to quaternary structure, F-type ATPases have 2 components, CF(1) - the catalytic core - and CF(0) - the membrane proton channel. CF(1) has five subunits: alpha(3), beta(3), gamma(1), delta(1), epsilon(1). CF(0) has three main subunits: a(1), b(2) and c(9-12). The alpha and beta chains form an alternating ring which encloses part of the gamma chain. CF(1) is attached to CF(0) by a central stalk formed by the gamma and epsilon chains, while a peripheral stalk is formed by the delta and b chains.

It is found in the cell inner membrane. The enzyme catalyses ATP + H2O + 4 H(+)(in) = ADP + phosphate + 5 H(+)(out). In terms of biological role, produces ATP from ADP in the presence of a proton gradient across the membrane. The alpha chain is a regulatory subunit. The protein is ATP synthase subunit alpha of Polynucleobacter necessarius subsp. necessarius (strain STIR1).